Reading from the N-terminus, the 1372-residue chain is DNA-directed RNA polymerase subunit beta (1372 aa).

This sequence belongs to the RNA polymerase beta chain family. In terms of assembly, the RNAP catalytic core consists of 2 alpha, 1 beta, 1 beta' and 1 omega subunit. When a sigma factor is associated with the core the holoenzyme is formed, which can initiate transcription.

It carries out the reaction RNA(n) + a ribonucleoside 5'-triphosphate = RNA(n+1) + diphosphate. Functionally, DNA-dependent RNA polymerase catalyzes the transcription of DNA into RNA using the four ribonucleoside triphosphates as substrates. The protein is DNA-directed RNA polymerase subunit beta of Bradyrhizobium sp. (strain BTAi1 / ATCC BAA-1182).